Reading from the N-terminus, the 317-residue chain is Actin-related protein 2/3 complex subunit 2 (317 aa).

It belongs to the ARPC2 family. As to quaternary structure, component of the Arp2/3 complex composed of arp2, act2, arc1/p41-ARC, arc2/p34-ARC, arc3/p21-ARC, arc4/p20-ARC and arc5/p16-ARC.

It localises to the cytoplasm. It is found in the cytoskeleton. Its subcellular location is the actin patch. Its function is as follows. Functions as actin-binding component of the Arp2/3 complex which is involved in regulation of actin polymerization and together with an activating nucleation-promoting factor (NPF) mediates the formation of branched actin networks. Seems to contact the mother actin filament. This is Actin-related protein 2/3 complex subunit 2 (arc2) from Schizosaccharomyces pombe (strain 972 / ATCC 24843) (Fission yeast).